Here is a 162-residue protein sequence, read N- to C-terminus: Phosphopantetheine adenylyltransferase (162 aa).

Ser11 provides a ligand contact to substrate. ATP-binding positions include 11-12 (SF) and His19. The substrate site is built by Lys43, Leu75, and Arg89. ATP is bound by residues 90–92 (GLR), Glu100, and 125–131 (YSYLSSS).

Belongs to the bacterial CoaD family. As to quaternary structure, homohexamer. Requires Mg(2+) as cofactor.

The protein resides in the cytoplasm. The catalysed reaction is (R)-4'-phosphopantetheine + ATP + H(+) = 3'-dephospho-CoA + diphosphate. The protein operates within cofactor biosynthesis; coenzyme A biosynthesis; CoA from (R)-pantothenate: step 4/5. Its function is as follows. Reversibly transfers an adenylyl group from ATP to 4'-phosphopantetheine, yielding dephospho-CoA (dPCoA) and pyrophosphate. The polypeptide is Phosphopantetheine adenylyltransferase (Geotalea uraniireducens (strain Rf4) (Geobacter uraniireducens)).